Reading from the N-terminus, the 654-residue chain is Biotin-dependent 3-methylcrotonyl-coenzyme A carboxylase alpha1 subunit (654 aa).

Positions 1-448 constitute a Biotin carboxylation domain; that stretch reads MFDTVLVANR…DTAVLDERSA (448 aa). The ATP-grasp domain occupies 120-319; it reads KNAVAAFDVP…LVEWQLRVGA (200 aa). 148-209 lines the ATP pocket; that stretch reads AAEVGYPVLI…ERFVLRPRHI (62 aa). Glu275, Glu290, and Asn292 together coordinate Mg(2+). Glu275, Glu290, and Asn292 together coordinate Mn(2+). The Biotinyl-binding domain maps to 578–653; sequence HRAVGARPAE…KVEQVLARIK (76 aa). N6-biotinyllysine is present on Lys620.

In terms of assembly, the biotin-dependent acyl-CoA carboxylase complex is composed of AccA1, which contains the biotin carboxylase (BC) and biotin carboxyl carrier protein (BCCP) domains, and AccD1, which contains the carboxyl transferase (CT) domain. The AccA1/AccD1 complex forms a dodecamer. Requires Mg(2+) as cofactor. The cofactor is Mn(2+). Biotin is required as a cofactor.

The enzyme catalyses N(6)-biotinyl-L-lysyl-[protein] + hydrogencarbonate + ATP = N(6)-carboxybiotinyl-L-lysyl-[protein] + ADP + phosphate + H(+). It functions in the pathway amino-acid degradation; L-leucine degradation. Component of a biotin-dependent acyl-CoA carboxylase complex. This subunit catalyzes the ATP-dependent carboxylation of the biotin carried by the biotin carboxyl carrier (BCC) domain, resulting in the formation of carboxyl biotin. When associated with the beta1 subunit AccD1, is involved in branched amino-acid catabolism with methylcrotonyl coenzyme A as the substrate. In Mycobacterium bovis (strain ATCC BAA-935 / AF2122/97), this protein is Biotin-dependent 3-methylcrotonyl-coenzyme A carboxylase alpha1 subunit (accA1).